Here is a 692-residue protein sequence, read N- to C-terminus: Elongation factor G (692 aa).

The tr-type G domain occupies 8-282 (ENTRNIGIMA…AVIDYLPSPL (275 aa)). GTP is bound by residues 17–24 (AHIDAGKT), 81–85 (DTPGH), and 135–138 (NKMD).

It belongs to the TRAFAC class translation factor GTPase superfamily. Classic translation factor GTPase family. EF-G/EF-2 subfamily.

It localises to the cytoplasm. Functionally, catalyzes the GTP-dependent ribosomal translocation step during translation elongation. During this step, the ribosome changes from the pre-translocational (PRE) to the post-translocational (POST) state as the newly formed A-site-bound peptidyl-tRNA and P-site-bound deacylated tRNA move to the P and E sites, respectively. Catalyzes the coordinated movement of the two tRNA molecules, the mRNA and conformational changes in the ribosome. The protein is Elongation factor G of Bacillus cereus (strain Q1).